The primary structure comprises 267 residues: Putative B3 domain-containing protein LOC_Os07g12820 (267 aa).

The TF-B3 DNA-binding region spans 4 to 99; that stretch reads PTFSMVKIKT…RLNVIIFNKE (96 aa).

It is found in the nucleus. In Oryza sativa subsp. japonica (Rice), this protein is Putative B3 domain-containing protein LOC_Os07g12820.